The chain runs to 181 residues: Isopentenyl-diphosphate Delta-isomerase (181 aa).

Residues His24 and His30 each coordinate Mn(2+). Residues 28-168 (LLHLAFSVLL…PDTFSVWFPT (141 aa)) enclose the Nudix hydrolase domain. Cys68 is an active-site residue. Cys68 contributes to the Mg(2+) binding site. His70 is a binding site for Mn(2+). Glu88 serves as a coordination point for Mg(2+). Mn(2+)-binding residues include Glu117 and Glu119. The active site involves Glu119.

Belongs to the IPP isomerase type 1 family. Mg(2+) serves as cofactor. Requires Mn(2+) as cofactor.

Its subcellular location is the cytoplasm. The enzyme catalyses isopentenyl diphosphate = dimethylallyl diphosphate. It functions in the pathway isoprenoid biosynthesis; dimethylallyl diphosphate biosynthesis; dimethylallyl diphosphate from isopentenyl diphosphate: step 1/1. Catalyzes the 1,3-allylic rearrangement of the homoallylic substrate isopentenyl (IPP) to its highly electrophilic allylic isomer, dimethylallyl diphosphate (DMAPP). This chain is Isopentenyl-diphosphate Delta-isomerase, found in Aliivibrio fischeri (strain ATCC 700601 / ES114) (Vibrio fischeri).